The sequence spans 32 residues: Cytochrome b6-f complex subunit 7 (32 aa).

The helical transmembrane segment at 9-27 (AAVFWVLIPVGLLGGAILL) threads the bilayer.

It belongs to the PetM family. As to quaternary structure, the 4 large subunits of the cytochrome b6-f complex are cytochrome b6, subunit IV (17 kDa polypeptide, PetD), cytochrome f and the Rieske protein, while the 4 small subunits are PetG, PetL, PetM and PetN. The complex functions as a dimer.

It localises to the cellular thylakoid membrane. Its function is as follows. Component of the cytochrome b6-f complex, which mediates electron transfer between photosystem II (PSII) and photosystem I (PSI), cyclic electron flow around PSI, and state transitions. The protein is Cytochrome b6-f complex subunit 7 of Prochlorococcus marinus (strain MIT 9211).